A 165-amino-acid chain; its full sequence is Protein AIG2 C (165 aa).

14–19 (YGSILE) is a substrate binding site. Catalysis depends on Glu-82, which acts as the Proton acceptor.

It belongs to the gamma-glutamylcyclotransferase family. Expressed in floral organs, leaves, stems and roots.

Putative gamma-glutamylcyclotransferase. The protein is Protein AIG2 C of Arabidopsis thaliana (Mouse-ear cress).